A 1671-amino-acid chain; its full sequence is Hybrid signal transduction protein dokA (1671 aa).

Residues 1-10 (MSSPHIELHS) are compositionally biased toward basic and acidic residues. 6 disordered regions span residues 1 to 27 (MSSPHIELHSQRTLSPQPSSNNFELTG), 42 to 89 (DDLN…DKND), 126 to 241 (QQQQ…RRSS), 365 to 451 (YSNN…NNEE), 579 to 603 (HNHNHHNHNHNNTTQRASSTDSPFI), and 629 to 651 (SNSSSNSNNNSNNASSSNCSSNA). Residues 11 to 27 (QRTLSPQPSSNNFELTG) show a composition bias toward polar residues. Low complexity-rich tracts occupy residues 45–83 (NNNNNNNNNNNNNNNNNNNNNNNNNNNNNNNNNNNNNNN) and 126–167 (QQQQ…QQQE). Positions 168-179 (QEQEQEQEQEQE) are enriched in acidic residues. The segment covering 367–449 (NNNNNTNTNN…NNNNNNNNNN (83 aa)) has biased composition (low complexity). The span at 591-600 (TTQRASSTDS) shows a compositional bias: polar residues. In terms of domain architecture, Histidine kinase spans 1050–1276 (NISHELRTPC…TFWFAIKVSI (227 aa)). A Response regulatory domain is found at 1519 to 1633 (YILVAEDNDI…RLQKTLSDWI (115 aa)).

Under osmotic stress conditions, this protein undergoes phosphorylation at a serine residue in the kinase core, which is not due to an autophosphorylation of dokA. This is in contrast to the classic two-component paradigm, which predicts only histidine and aspartate phosphorylation.

In terms of biological role, part of the osmoregulatory pathway which leads to the increase of intracellular cAMP concentration in response to hyperosmotic stress. Thought to negatively regulate the rdeA-regA pathway by acting as a phosphatase towards the HPt protein rdeA. Has probably no histidine kinase activity. This Dictyostelium discoideum (Social amoeba) protein is Hybrid signal transduction protein dokA (dokA).